The chain runs to 565 residues: Sulfite reductase [NADPH] hemoprotein beta-component (565 aa).

[4Fe-4S] cluster contacts are provided by cysteine 429, cysteine 435, cysteine 474, and cysteine 478. Cysteine 478 contacts siroheme.

It belongs to the nitrite and sulfite reductase 4Fe-4S domain family. In terms of assembly, alpha(8)-beta(8). The alpha component is a flavoprotein, the beta component is a hemoprotein. The cofactor is siroheme. Requires [4Fe-4S] cluster as cofactor.

It catalyses the reaction hydrogen sulfide + 3 NADP(+) + 3 H2O = sulfite + 3 NADPH + 4 H(+). Its pathway is sulfur metabolism; hydrogen sulfide biosynthesis; hydrogen sulfide from sulfite (NADPH route): step 1/1. Functionally, component of the sulfite reductase complex that catalyzes the 6-electron reduction of sulfite to sulfide. This is one of several activities required for the biosynthesis of L-cysteine from sulfate. This Shewanella oneidensis (strain ATCC 700550 / JCM 31522 / CIP 106686 / LMG 19005 / NCIMB 14063 / MR-1) protein is Sulfite reductase [NADPH] hemoprotein beta-component.